A 158-amino-acid chain; its full sequence is Pycsar effector protein SaPycTM (158 aa).

3 helical membrane-spanning segments follow: residues 20 to 40 (FADA…NFNF), 53 to 73 (IFNF…AFAV), and 136 to 156 (VFII…FQII).

It is found in the cell membrane. Functionally, pycsar (pyrimidine cyclase system for antiphage resistance) provides immunity against bacteriophage. The pyrimidine cyclase (PycC) synthesizes cyclic nucleotides in response to infection; these serve as specific second messenger signals. The signals activate the adjacent effector, leading to bacterial cell death and abortive phage infection. A clade E Pycsar system. The effector gene of a two-gene Pycsar system. Expression of this and adjacent SaPycC cytidylate cyclase (AC P0DV38) probably confers resistance to bacteriophage. The genes are probably only expressed in response to bacteriophage infection. Probably only responds to cCMP (produced by its cognate NTP cyclase), acts by impairing membrane integrity. In Staphylococcus aureus, this protein is Pycsar effector protein SaPycTM.